A 204-amino-acid chain; its full sequence is FMN-dependent NADH:quinone oxidoreductase (204 aa).

FMN-binding positions include serine 9, 15–17 (SVS), 95–98 (MYNF), and 139–142 (SRGG).

This sequence belongs to the azoreductase type 1 family. As to quaternary structure, homodimer. FMN serves as cofactor.

The enzyme catalyses 2 a quinone + NADH + H(+) = 2 a 1,4-benzosemiquinone + NAD(+). It catalyses the reaction N,N-dimethyl-1,4-phenylenediamine + anthranilate + 2 NAD(+) = 2-(4-dimethylaminophenyl)diazenylbenzoate + 2 NADH + 2 H(+). Functionally, quinone reductase that provides resistance to thiol-specific stress caused by electrophilic quinones. Its function is as follows. Also exhibits azoreductase activity. Catalyzes the reductive cleavage of the azo bond in aromatic azo compounds to the corresponding amines. In Methylocella silvestris (strain DSM 15510 / CIP 108128 / LMG 27833 / NCIMB 13906 / BL2), this protein is FMN-dependent NADH:quinone oxidoreductase.